A 231-amino-acid polypeptide reads, in one-letter code: Putative histone H1.9 (231 aa).

The H15 domain occupies 113–177 (QKPSTSKVIL…GSAGSFTLGK (65 aa)). S135 is modified (phosphoserine). The segment at 177-214 (KKQASKSKLKVKRQRQQRWRSGQRPFGQHRSLLGSKQG) is disordered. The segment covering 179–194 (QASKSKLKVKRQRQQR) has biased composition (basic residues).

It belongs to the histone H1/H5 family. In terms of tissue distribution, expressed exclusively in the testis.

It localises to the nucleus. It is found in the chromosome. Functionally, DNA-binding protein that may be implicated in chromatin remodeling and/or transcriptional regulation during spermiogenesis, the process of spermatid maturation into spermatozoa. The chain is Putative histone H1.9 from Homo sapiens (Human).